The chain runs to 195 residues: Thymidylate kinase (195 aa).

7 to 14 provides a ligand contact to ATP; the sequence is GIDGVGKS.

It belongs to the thymidylate kinase family.

The enzyme catalyses dTMP + ATP = dTDP + ADP. Functionally, phosphorylation of dTMP to form dTDP in both de novo and salvage pathways of dTTP synthesis. This chain is Thymidylate kinase, found in Campylobacter concisus (strain 13826).